The sequence spans 34 residues: uncharacterized protein (34 aa).

This is an uncharacterized protein from Haemophilus influenzae (strain ATCC 51907 / DSM 11121 / KW20 / Rd).